Reading from the N-terminus, the 303-residue chain is Nod factor export ATP-binding protein I (303 aa).

Positions 5–235 constitute an ABC transporter domain; it reads LQMRNVRKLY…EIGCDVVEVY (231 aa). 37–44 is a binding site for ATP; the sequence is GPNGAGKT.

Belongs to the ABC transporter superfamily. Lipooligosaccharide exporter (TC 3.A.1.102) family. As to quaternary structure, the complex is composed of two ATP-binding proteins (NodI) and two transmembrane proteins (NodJ).

The protein resides in the cell inner membrane. Functionally, part of the ABC transporter complex NodIJ involved in the export of the nodulation factors (Nod factors), the bacterial signal molecules that induce symbiosis and subsequent nodulation induction. Nod factors are LCO (lipo-chitin oligosaccharide), a modified beta-1,4-linked N-acetylglucosamine oligosaccharide. This subunit is responsible for energy coupling to the transport system. The polypeptide is Nod factor export ATP-binding protein I (Cupriavidus metallidurans (strain ATCC 43123 / DSM 2839 / NBRC 102507 / CH34) (Ralstonia metallidurans)).